We begin with the raw amino-acid sequence, 269 residues long: Ribosomal RNA small subunit methyltransferase J (269 aa).

S-adenosyl-L-methionine-binding positions include 125–126 (ER) and aspartate 179.

It belongs to the methyltransferase superfamily. RsmJ family.

It is found in the cytoplasm. It carries out the reaction guanosine(1516) in 16S rRNA + S-adenosyl-L-methionine = N(2)-methylguanosine(1516) in 16S rRNA + S-adenosyl-L-homocysteine + H(+). In terms of biological role, specifically methylates the guanosine in position 1516 of 16S rRNA. The chain is Ribosomal RNA small subunit methyltransferase J from Pseudomonas syringae pv. tomato (strain ATCC BAA-871 / DC3000).